The chain runs to 323 residues: tRNA U34 carboxymethyltransferase (323 aa).

Residues K91, W105, K110, G130, 181–182, M196, Y200, and R315 contribute to the carboxy-S-adenosyl-L-methionine site; that span reads IE.

This sequence belongs to the class I-like SAM-binding methyltransferase superfamily. CmoB family. In terms of assembly, homotetramer.

The catalysed reaction is carboxy-S-adenosyl-L-methionine + 5-hydroxyuridine(34) in tRNA = 5-carboxymethoxyuridine(34) in tRNA + S-adenosyl-L-homocysteine + H(+). Catalyzes carboxymethyl transfer from carboxy-S-adenosyl-L-methionine (Cx-SAM) to 5-hydroxyuridine (ho5U) to form 5-carboxymethoxyuridine (cmo5U) at position 34 in tRNAs. This Yersinia pseudotuberculosis serotype O:3 (strain YPIII) protein is tRNA U34 carboxymethyltransferase.